Reading from the N-terminus, the 206-residue chain is Large ribosomal subunit protein uL3 (206 aa).

The protein belongs to the universal ribosomal protein uL3 family. In terms of assembly, part of the 50S ribosomal subunit. Forms a cluster with proteins L14 and L19.

In terms of biological role, one of the primary rRNA binding proteins, it binds directly near the 3'-end of the 23S rRNA, where it nucleates assembly of the 50S subunit. The polypeptide is Large ribosomal subunit protein uL3 (Cytophaga hutchinsonii (strain ATCC 33406 / DSM 1761 / CIP 103989 / NBRC 15051 / NCIMB 9469 / D465)).